Reading from the N-terminus, the 263-residue chain is Benzil reductase ((S)-benzoin forming) IRC24 (263 aa).

NADP(+)-binding residues include Ile-7 and Asn-86. Ser-143 acts as the Proton donor in catalysis. The NADP(+) site is built by Tyr-157, Lys-161, Val-190, and Thr-192. Tyr-157 (proton acceptor) is an active-site residue. The active-site Lowers pKa of active site Tyr is the Lys-161.

The protein belongs to the short-chain dehydrogenases/reductases (SDR) family.

It carries out the reaction (S)-benzoin + NADP(+) = benzil + NADPH + H(+). The enzyme catalyses 2-hydroxy-1-phenyl-1-propanone + NADP(+) = 1-phenyl-1,2-propanedione + NADPH + H(+). Reduces benzil stereospecifically to (S)-benzoin. Also reduces 1-phenyl-1,2-propanedione to 2-hydroxy-1-phenyl-1-propanone. Is probably involved in a pathway contributing to genomic integrity. This Saccharomyces cerevisiae (strain ATCC 204508 / S288c) (Baker's yeast) protein is Benzil reductase ((S)-benzoin forming) IRC24 (IRC24).